A 730-amino-acid polypeptide reads, in one-letter code: Nitrogen fixation protein FixI (730 aa).

Residues 1-101 (MHVTRDFSHY…AEVAEVAESR (101 aa)) lie on the Cytoplasmic side of the membrane. Residues 19-85 (KHIDLAVEGV…RLEELGYKAY (67 aa)) enclose the HMA domain. A metal cation-binding residues include cysteine 30 and cysteine 33. Residues 102–123 (FLLRCLGVAAFATMNVMMLSIP) traverse the membrane as a helical segment. Residues 124–138 (VWSGNVSDMLPEQRD) are Extracellular-facing. A helical transmembrane segment spans residues 139-162 (FFHWLSALIALPAAAYAGQPFFRS). At 163–168 (AWRALS) the chain is on the cytoplasmic side. A helical transmembrane segment spans residues 169 to 190 (AKTTNMDVPISIGVILALGMSV). Over 191-202 (VETIHHAEHAYF) the chain is Extracellular. Residues 203–223 (DAAIMLLTFLLVGRFLDQNMR) traverse the membrane as a helical segment. Topologically, residues 224-352 (RRTRAVAGNL…RSRYMRLADR (129 aa)) are cytoplasmic. Residues 353-375 (ASRLYAPVVHATALITILGWVIA) traverse the membrane as a helical segment. Residues 376–382 (GASWHDA) are Extracellular-facing. A helical membrane pass occupies residues 383-400 (IVTGVAVLIITCPCALGL). The Cytoplasmic segment spans residues 401 to 676 (AIPTVQTVAS…DSARKALHLM (276 aa)). The 4-aspartylphosphate intermediate role is filled by aspartate 438. Mg(2+)-binding residues include aspartate 622 and aspartate 626. The helical transmembrane segment at 677-696 (RQNLWLAIGYNVLAVPVAIS) threads the bilayer. At 697-701 (GVVTP) the chain is on the extracellular side. Residues 702-720 (LIAAAAMSGSSILVMLNSL) form a helical membrane-spanning segment. Over 721 to 730 (RARSDSREIV) the chain is Cytoplasmic.

The protein belongs to the cation transport ATPase (P-type) (TC 3.A.3) family. Type IB subfamily.

The protein localises to the cell membrane. The catalysed reaction is ATP + H2O = ADP + phosphate + H(+). In terms of biological role, fixI is a pump of a specific cation involved in symbiotic nitrogen fixation. The four proteins FixG, FixH, FixI, and FixS may participate in a membrane-bound complex coupling the FixI cation pump with a redox process catalyzed by FixG. The sequence is that of Nitrogen fixation protein FixI (fixI) from Bradyrhizobium diazoefficiens (strain JCM 10833 / BCRC 13528 / IAM 13628 / NBRC 14792 / USDA 110).